Reading from the N-terminus, the 338-residue chain is Fructose-bisphosphate aldolase (338 aa).

Arg50 and Lys138 together coordinate substrate. Glu179 (proton acceptor) is an active-site residue. The active-site Schiff-base intermediate with dihydroxyacetone-P is the Lys221.

The protein belongs to the class I fructose-bisphosphate aldolase family.

It catalyses the reaction beta-D-fructose 1,6-bisphosphate = D-glyceraldehyde 3-phosphate + dihydroxyacetone phosphate. It participates in carbohydrate degradation; glycolysis; D-glyceraldehyde 3-phosphate and glycerone phosphate from D-glucose: step 4/4. This chain is Fructose-bisphosphate aldolase, found in Encephalitozoon cuniculi (strain GB-M1) (Microsporidian parasite).